The following is a 353-amino-acid chain: Methylthioribose-1-phosphate isomerase (353 aa).

Substrate contacts are provided by residues 51–53, Arg94, and Gln199; that span reads RGA. The Proton donor role is filled by Asp240. Residue 250–251 coordinates substrate; sequence NK.

Belongs to the eIF-2B alpha/beta/delta subunits family. MtnA subfamily. As to quaternary structure, homodimer.

It catalyses the reaction 5-(methylsulfanyl)-alpha-D-ribose 1-phosphate = 5-(methylsulfanyl)-D-ribulose 1-phosphate. It participates in amino-acid biosynthesis; L-methionine biosynthesis via salvage pathway; L-methionine from S-methyl-5-thio-alpha-D-ribose 1-phosphate: step 1/6. In terms of biological role, catalyzes the interconversion of methylthioribose-1-phosphate (MTR-1-P) into methylthioribulose-1-phosphate (MTRu-1-P). This Bacillus licheniformis (strain ATCC 14580 / DSM 13 / JCM 2505 / CCUG 7422 / NBRC 12200 / NCIMB 9375 / NCTC 10341 / NRRL NRS-1264 / Gibson 46) protein is Methylthioribose-1-phosphate isomerase.